The sequence spans 122 residues: Large ribosomal subunit protein uL14 (122 aa).

This sequence belongs to the universal ribosomal protein uL14 family. As to quaternary structure, part of the 50S ribosomal subunit. Forms a cluster with proteins L3 and L19. In the 70S ribosome, L14 and L19 interact and together make contacts with the 16S rRNA in bridges B5 and B8.

Functionally, binds to 23S rRNA. Forms part of two intersubunit bridges in the 70S ribosome. This is Large ribosomal subunit protein uL14 from Dehalococcoides mccartyi (strain ATCC BAA-2100 / JCM 16839 / KCTC 5957 / BAV1).